A 467-amino-acid chain; its full sequence is Chromosomal replication initiator protein DnaA (467 aa).

The segment at 1–85 (MSLSLWQQCL…FEVGAKPASS (85 aa)) is domain I, interacts with DnaA modulators. The tract at residues 85 to 130 (SLQKGAVSPAAAAIPAAQVQTARVAPTIVRPGWDNVPAPAEPTYRS) is domain II. A domain III, AAA+ region region spans residues 131 to 347 (NVNVKHTFDN…GALNRVIANA (217 aa)). Gly175, Gly177, Lys178, and Thr179 together coordinate ATP. A domain IV, binds dsDNA region spans residues 348-467 (NFTGRAITID…FSNLIRTLSS (120 aa)).

Belongs to the DnaA family. In terms of assembly, oligomerizes as a right-handed, spiral filament on DNA at oriC.

The protein localises to the cytoplasm. Plays an essential role in the initiation and regulation of chromosomal replication. ATP-DnaA binds to the origin of replication (oriC) to initiate formation of the DNA replication initiation complex once per cell cycle. Binds the DnaA box (a 9 base pair repeat at the origin) and separates the double-stranded (ds)DNA. Forms a right-handed helical filament on oriC DNA; dsDNA binds to the exterior of the filament while single-stranded (ss)DNA is stabiized in the filament's interior. The ATP-DnaA-oriC complex binds and stabilizes one strand of the AT-rich DNA unwinding element (DUE), permitting loading of DNA polymerase. After initiation quickly degrades to an ADP-DnaA complex that is not apt for DNA replication. Binds acidic phospholipids. The chain is Chromosomal replication initiator protein DnaA from Klebsiella pneumoniae (strain 342).